A 1962-amino-acid chain; its full sequence is Sodium channel protein type 10 subunit alpha (1962 aa).

Topologically, residues Met-1–Lys-125 are cytoplasmic. Positions Gln-32–Asp-56 are disordered. Residues Ala-33–Arg-42 show a composition bias toward basic residues. Over residues Glu-43–Leu-55 the composition is skewed to basic and acidic residues. One copy of the I repeat lies at Phe-116–Gln-414. Residues Val-126 to Gln-149 traverse the membrane as a helical segment. The Extracellular portion of the chain corresponds to Thr-150 to Asp-154. Residues Arg-155–Ala-174 form a helical membrane-spanning segment. Topologically, residues Arg-175 to Asp-187 are cytoplasmic. The chain crosses the membrane as a helical span at residues Pro-188 to Thr-206. The Extracellular segment spans residues Ala-207–Ser-212. A helical; Voltage-sensor membrane pass occupies residues Gly-213 to Leu-232. The Cytoplasmic segment spans residues Lys-233–Asp-248. Residues Val-249 to Leu-272 form a helical membrane-spanning segment. Topologically, residues Lys-273–Ser-350 are extracellular. An intrachain disulfide couples Cys-276 to Cys-328. 4 N-linked (GlcNAc...) asparagine glycosylation sites follow: Asn-284, Asn-288, Asn-321, and Asn-344. An intramembrane region (pore-forming) is located at residues Phe-351 to Leu-375. The Extracellular portion of the chain corresponds to Arg-376 to Tyr-382. A helical transmembrane segment spans residues Met-383 to Ala-408. Residues Tyr-409–Phe-668 lie on the Cytoplasmic side of the membrane. Ser-450, Ser-453, Ser-476, and Ser-488 each carry phosphoserine. Positions His-452 to Asn-463 are enriched in polar residues. 2 disordered regions span residues His-452–Gln-493 and Leu-521–Leu-586. Phosphoserine is present on residues Ser-621 and Ser-624. The II repeat unit spans residues Cys-656 to Gln-920. Residues Gly-669–Met-693 form a helical membrane-spanning segment. Topologically, residues Glu-694–Ala-704 are extracellular. A helical transmembrane segment spans residues Met-705 to Phe-728. The Cytoplasmic segment spans residues Asp-729–Lys-736. Residues Arg-737 to Ala-756 form a helical membrane-spanning segment. Residues Arg-757–Ser-762 are Extracellular-facing. Residues Val-763 to Leu-782 traverse the membrane as a helical; Voltage-sensor segment. The Cytoplasmic portion of the chain corresponds to Asn-783 to Asn-798. The chain crosses the membrane as a helical span at residues Leu-799–Gly-819. At Glu-820–Asp-843 the chain is on the extracellular side. Asn-828 carries N-linked (GlcNAc...) asparagine glycosylation. An intramembrane region (pore-forming) is located at residues Phe-844 to Trp-864. At Ala-865 to Ser-873 the chain is on the extracellular side. Cys-866 and Cys-875 are oxidised to a cystine. The helical transmembrane segment at Ile-874–Leu-899 threads the bilayer. Residues Asn-900–Arg-1154 lie on the Cytoplasmic side of the membrane. Acidic residues predominate over residues Leu-1015 to Ser-1026. Residues Leu-1015–Leu-1035 form a disordered region. One copy of the III repeat lies at Gln-1147–Leu-1456. A helical membrane pass occupies residues Ile-1155–Phe-1178. Residues Glu-1179–Ala-1191 lie on the Extracellular side of the membrane. A helical membrane pass occupies residues Leu-1192–Phe-1217. Residues Lys-1218–Asn-1223 are Cytoplasmic-facing. Residues Ala-1224 to Leu-1245 traverse the membrane as a helical segment. Over Gln-1246–Asp-1249 the chain is Extracellular. The chain crosses the membrane as a helical; Voltage-sensor span at residues Val-1250 to Phe-1271. The Cytoplasmic segment spans residues Glu-1272–Asn-1290. The helical transmembrane segment at Val-1291–Ile-1318 threads the bilayer. Residues Asn-1319, Asn-1335, and Asn-1343 are each glycosylated (N-linked (GlcNAc...) asparagine). Residues Asn-1319 to Val-1360 are Extracellular-facing. Positions Ala-1361–Ala-1382 form an intramembrane region, pore-forming. Topologically, residues Ala-1383–Asn-1398 are extracellular. The helical transmembrane segment at Val-1399–Ile-1425 threads the bilayer. Residues Asp-1426 to Asp-1478 are Cytoplasmic-facing. Ser-1458 is modified (phosphoserine; by PKC). The IV repeat unit spans residues Ile-1465–Gln-1764. A helical membrane pass occupies residues Ile-1479–Val-1502. The Extracellular segment spans residues Glu-1503 to Lys-1513. The helical transmembrane segment at Ile-1514 to Leu-1537 threads the bilayer. Topologically, residues Arg-1538–Thr-1543 are cytoplasmic. Residues Asn-1544 to Leu-1567 form a helical membrane-spanning segment. At Thr-1568–Phe-1579 the chain is on the extracellular side. A helical; Voltage-sensor transmembrane segment spans residues Arg-1580–Arg-1601. Topologically, residues Thr-1602–Asn-1616 are cytoplasmic. Residues Ile-1617–Val-1639 form a helical membrane-spanning segment. Topologically, residues Ser-1640–Thr-1653 are extracellular. Residues Phe-1654 to Pro-1676 constitute an intramembrane region (pore-forming). Topologically, residues Ile-1677–Val-1704 are extracellular. An N-linked (GlcNAc...) asparagine glycan is attached at Asn-1693. Residues Gly-1705–Leu-1729 form a helical membrane-spanning segment. Residues Glu-1730–Pro-1962 lie on the Cytoplasmic side of the membrane. An IQ domain is found at Glu-1858 to Pro-1887. The interval Lys-1914–Pro-1962 is disordered. Over residues Asp-1928–Gln-1947 the composition is skewed to polar residues.

Belongs to the sodium channel (TC 1.A.1.10) family. Nav1.8/SCN10A subfamily. As to quaternary structure, the channel consists of an ion conducting pore forming alpha-subunit regulated by one or more associated auxiliary subunits SCN1B, SCN2B and SCN3B; electrophysiological properties may vary depending on the type of the associated beta subunits. Found in a number of complexes with PRX, DYNLT1 and PDZD2. Interacts with proteins such as FSTL1, PRX, DYNLT1, PDZD2, S100A10 and many others. Interacts with NEDD4 and NEDD4L. In terms of processing, ubiquitinated by NEDD4L; which promotes its endocytosis. Phosphorylation at Ser-1458 by PKC in a highly conserved cytoplasmic loop slows inactivation of the sodium channel and reduces peak sodium currents. Post-translationally, lacks the cysteine which covalently binds the conotoxin GVIIJ. This cysteine (position 825) is speculated in other sodium channel subunits alpha to be implied in covalent binding with the sodium channel subunit beta-2 or beta-4. Expressed in nodose ganglia, but not in cortex, hippocampus, cerebellum, liver, heart and skeletal muscle.

The protein localises to the cell membrane. The catalysed reaction is Na(+)(in) = Na(+)(out). In terms of biological role, tetrodotoxin-resistant channel that mediates the voltage-dependent sodium ion permeability of excitable membranes. Assuming opened or closed conformations in response to the voltage difference across the membrane, the protein forms a sodium-selective channel through which sodium ions may pass in accordance with their electrochemical gradient. Plays a role in neuropathic pain mechanisms. This Canis lupus familiaris (Dog) protein is Sodium channel protein type 10 subunit alpha (SCN10A).